The sequence spans 599 residues: 2-succinyl-5-enolpyruvyl-6-hydroxy-3-cyclohexene-1-carboxylate synthase (599 aa).

Low complexity predominate over residues 1–21 (MTSENPLDPNNAYAAADDAPL). A disordered region spans residues 1 to 35 (MTSENPLDPNNAYAAADDAPLSEGDPTGAPADSGS).

Belongs to the TPP enzyme family. MenD subfamily. In terms of assembly, homodimer. Mg(2+) is required as a cofactor. Mn(2+) serves as cofactor. Requires thiamine diphosphate as cofactor.

It catalyses the reaction isochorismate + 2-oxoglutarate + H(+) = 5-enolpyruvoyl-6-hydroxy-2-succinyl-cyclohex-3-ene-1-carboxylate + CO2. Its pathway is quinol/quinone metabolism; 1,4-dihydroxy-2-naphthoate biosynthesis; 1,4-dihydroxy-2-naphthoate from chorismate: step 2/7. It participates in quinol/quinone metabolism; menaquinone biosynthesis. Catalyzes the thiamine diphosphate-dependent decarboxylation of 2-oxoglutarate and the subsequent addition of the resulting succinic semialdehyde-thiamine pyrophosphate anion to isochorismate to yield 2-succinyl-5-enolpyruvyl-6-hydroxy-3-cyclohexene-1-carboxylate (SEPHCHC). The polypeptide is 2-succinyl-5-enolpyruvyl-6-hydroxy-3-cyclohexene-1-carboxylate synthase (Arthrobacter sp. (strain FB24)).